The following is a 400-amino-acid chain: Phosphoglycerate kinase (400 aa).

Substrate is bound by residues aspartate 24–asparagine 26, arginine 40, histidine 63–arginine 66, arginine 121, and arginine 154. ATP contacts are provided by residues lysine 205, glycine 296, glutamate 327, and glycine 356–serine 359.

Belongs to the phosphoglycerate kinase family. As to quaternary structure, monomer.

Its subcellular location is the cytoplasm. It carries out the reaction (2R)-3-phosphoglycerate + ATP = (2R)-3-phospho-glyceroyl phosphate + ADP. The protein operates within carbohydrate degradation; glycolysis; pyruvate from D-glyceraldehyde 3-phosphate: step 2/5. The polypeptide is Phosphoglycerate kinase (Thermosynechococcus vestitus (strain NIES-2133 / IAM M-273 / BP-1)).